The primary structure comprises 348 residues: Protein RecA (348 aa).

ATP is bound at residue 64-71 (GPESSGKT). Positions 328–348 (DTGGAAPAQEDEAQAQEELEF) are disordered. Over residues 336-348 (QEDEAQAQEELEF) the composition is skewed to acidic residues.

The protein belongs to the RecA family.

Its subcellular location is the cytoplasm. Its function is as follows. Can catalyze the hydrolysis of ATP in the presence of single-stranded DNA, the ATP-dependent uptake of single-stranded DNA by duplex DNA, and the ATP-dependent hybridization of homologous single-stranded DNAs. It interacts with LexA causing its activation and leading to its autocatalytic cleavage. The chain is Protein RecA from Bacillus licheniformis (strain ATCC 14580 / DSM 13 / JCM 2505 / CCUG 7422 / NBRC 12200 / NCIMB 9375 / NCTC 10341 / NRRL NRS-1264 / Gibson 46).